The chain runs to 61 residues: Small ribosomal subunit protein uS14 (61 aa).

4 residues coordinate Zn(2+): Cys24, Cys27, Cys40, and Cys43.

It belongs to the universal ribosomal protein uS14 family. Zinc-binding uS14 subfamily. As to quaternary structure, part of the 30S ribosomal subunit. Contacts proteins S3 and S10. The cofactor is Zn(2+).

Binds 16S rRNA, required for the assembly of 30S particles and may also be responsible for determining the conformation of the 16S rRNA at the A site. The polypeptide is Small ribosomal subunit protein uS14 (Roseiflexus castenholzii (strain DSM 13941 / HLO8)).